The following is a 131-amino-acid chain: Profilin (131 aa).

The protein belongs to the profilin family. As to quaternary structure, occurs in many kinds of cells as a complex with monomeric actin in a 1:1 ratio.

Its subcellular location is the cytoplasm. It localises to the cytoskeleton. Binds to actin and affects the structure of the cytoskeleton. At high concentrations, profilin prevents the polymerization of actin, whereas it enhances it at low concentrations. By binding to PIP2, it inhibits the formation of IP3 and DG. The sequence is that of Profilin from Capsicum annuum (Capsicum pepper).